Consider the following 304-residue polypeptide: MPVQVLNRLPAIKILQNEDVFVMQKSRNTFKEQSSLKVLILNLMPKKIETENQLLRLLSNSPLQIDIQLLRIDGHIPKNTPVEHLNNFYCSFPDIRYKNFDGLIVTGAPLGLINFENITFWPQIEQLFLWAKEHINSILFICWAVQAALKVLYNLPKFTRKRKLVGIYQHNTINSHALLTKGFDEKFLAPHSRYSDFPKDIIYRNTDLEILAESDEAGAYLLMSQDKRLIFITGHPEYDAMTLSQEYYRDLKLGLSPKLPDHYFPQDNPNLVPKISWRSHAYLLFANWLNYYVQQNVIKHLSSF.

Cys-142 acts as the Acyl-thioester intermediate in catalysis. Positions 163 and 192 each coordinate substrate. His-235 acts as the Proton acceptor in catalysis. Glu-237 is a catalytic residue. Arg-249 serves as a coordination point for substrate.

Belongs to the MetA family.

The protein resides in the cytoplasm. The catalysed reaction is L-homoserine + succinyl-CoA = O-succinyl-L-homoserine + CoA. Its pathway is amino-acid biosynthesis; L-methionine biosynthesis via de novo pathway; O-succinyl-L-homoserine from L-homoserine: step 1/1. In terms of biological role, transfers a succinyl group from succinyl-CoA to L-homoserine, forming succinyl-L-homoserine. This is Homoserine O-succinyltransferase from Blochmanniella pennsylvanica (strain BPEN).